The chain runs to 217 residues: Small ribosomal subunit protein uS5 (217 aa).

Positions 49 to 112 constitute an S5 DRBM domain; it reads LEEKVLDVKL…AQAKKNIIRV (64 aa).

This sequence belongs to the universal ribosomal protein uS5 family. As to quaternary structure, part of the 30S ribosomal subunit. Contacts protein S4.

With S4 and S12 plays an important role in translational accuracy. The sequence is that of Small ribosomal subunit protein uS5 from Methanocaldococcus jannaschii (strain ATCC 43067 / DSM 2661 / JAL-1 / JCM 10045 / NBRC 100440) (Methanococcus jannaschii).